A 993-amino-acid chain; its full sequence is ER membrane protein complex subunit 1 (993 aa).

The signal sequence occupies residues 1–22 (MAAEWASRFWLWATLLIPAAAV). Residues 23-962 (YEDQVGKFDW…FDVLKDDYDY (940 aa)) lie on the Lumenal side of the membrane. Disulfide bonds link C227/C237 and C338/C368. Residues N370, N818, and N913 are each glycosylated (N-linked (GlcNAc...) asparagine). Residues 963–983 (VLISSVLFGLVFATMITKRLA) form a helical membrane-spanning segment. The Cytoplasmic portion of the chain corresponds to 984 to 993 (QVKLLNRAWR).

The protein belongs to the EMC1 family. As to quaternary structure, component of the ER membrane protein complex (EMC).

Its subcellular location is the endoplasmic reticulum membrane. Part of the endoplasmic reticulum membrane protein complex (EMC) that enables the energy-independent insertion into endoplasmic reticulum membranes of newly synthesized membrane proteins. Preferentially accommodates proteins with transmembrane domains that are weakly hydrophobic or contain destabilizing features such as charged and aromatic residues. Involved in the cotranslational insertion of multi-pass membrane proteins in which stop-transfer membrane-anchor sequences become ER membrane spanning helices. It is also required for the post-translational insertion of tail-anchored/TA proteins in endoplasmic reticulum membranes. By mediating the proper cotranslational insertion of N-terminal transmembrane domains in an N-exo topology, with translocated N-terminus in the lumen of the ER, controls the topology of multi-pass membrane proteins like the G protein-coupled receptors. By regulating the insertion of various proteins in membranes, it is indirectly involved in many cellular processes. The polypeptide is ER membrane protein complex subunit 1 (EMC1) (Homo sapiens (Human)).